Here is a 1405-residue protein sequence, read N- to C-terminus: DNA-directed RNA polymerase subunit beta' (1405 aa).

Residues Cys70, Cys72, Cys85, and Cys88 each coordinate Zn(2+). Positions 460, 462, and 464 each coordinate Mg(2+). Cys814, Cys888, Cys895, and Cys898 together coordinate Zn(2+).

It belongs to the RNA polymerase beta' chain family. In terms of assembly, the RNAP catalytic core consists of 2 alpha, 1 beta, 1 beta' and 1 omega subunit. When a sigma factor is associated with the core the holoenzyme is formed, which can initiate transcription. Mg(2+) serves as cofactor. It depends on Zn(2+) as a cofactor.

The enzyme catalyses RNA(n) + a ribonucleoside 5'-triphosphate = RNA(n+1) + diphosphate. Functionally, DNA-dependent RNA polymerase catalyzes the transcription of DNA into RNA using the four ribonucleoside triphosphates as substrates. The polypeptide is DNA-directed RNA polymerase subunit beta' (Shewanella oneidensis (strain ATCC 700550 / JCM 31522 / CIP 106686 / LMG 19005 / NCIMB 14063 / MR-1)).